A 356-amino-acid chain; its full sequence is MKKSDFHYDLPEELIAQAPLAERAASRLLVVPPSPQALADRRARDLPELLQPGDLLIFNDTRVIPARLFGQKASGGRVEILIERLLGERQARVQIGASKSPKAGSLIALDAGGQAEVLGRDGAFYLLRFEIPTPLEHWLLEAGRLPLPPYIRREPGVEDRERYQTVFAREVGAVAAPTAGLHFDEALLARLRERGVEFGHVTLHVGAGTFQPVRVDKLDQHVMHKEWLNVGAALVEQVRRTRARGGRVIAVGTTVVRSLESAWRTTDAAPEGELQPFAGETQIFILPGYRIRSVDAMVTNFHLPESTLMMMVSAFAGRERIFEAYHHAIAQRYRFFSYGDAMLLWSRAWGLGSGDS.

It belongs to the QueA family. As to quaternary structure, monomer.

It is found in the cytoplasm. The catalysed reaction is 7-aminomethyl-7-carbaguanosine(34) in tRNA + S-adenosyl-L-methionine = epoxyqueuosine(34) in tRNA + adenine + L-methionine + 2 H(+). It functions in the pathway tRNA modification; tRNA-queuosine biosynthesis. Functionally, transfers and isomerizes the ribose moiety from AdoMet to the 7-aminomethyl group of 7-deazaguanine (preQ1-tRNA) to give epoxyqueuosine (oQ-tRNA). This chain is S-adenosylmethionine:tRNA ribosyltransferase-isomerase, found in Xanthomonas oryzae pv. oryzae (strain KACC10331 / KXO85).